Here is a 285-residue protein sequence, read N- to C-terminus: tRNA pseudouridine synthase A (285 aa).

D64 functions as the Nucleophile in the catalytic mechanism. Y125 serves as a coordination point for substrate.

It belongs to the tRNA pseudouridine synthase TruA family. In terms of assembly, homodimer.

The catalysed reaction is uridine(38/39/40) in tRNA = pseudouridine(38/39/40) in tRNA. Functionally, formation of pseudouridine at positions 38, 39 and 40 in the anticodon stem and loop of transfer RNAs. The protein is tRNA pseudouridine synthase A of Streptomyces avermitilis (strain ATCC 31267 / DSM 46492 / JCM 5070 / NBRC 14893 / NCIMB 12804 / NRRL 8165 / MA-4680).